We begin with the raw amino-acid sequence, 1043 residues long: Protein translocase subunit SecA (1043 aa).

Residues Gln143, 161–165, and Asp665 each bind ATP; that span reads GEGKT. Residues 980–1005 are compositionally biased toward low complexity; sequence ATAAPAAETTTTAKAADAARQQPPAA. A disordered region spans residues 980–1043; sequence ATAAPAAETT…KYKHCHGRNA (64 aa). The segment covering 1008-1022 has biased composition (basic and acidic residues); sequence EEQKRQPVHVEKTPG. Residues Cys1027, Cys1029, Cys1038, and His1039 each coordinate Zn(2+). Basic residues predominate over residues 1033–1043; that stretch reads KKYKHCHGRNA.

This sequence belongs to the SecA family. Monomer and homodimer. Part of the essential Sec protein translocation apparatus which comprises SecA, SecYEG and auxiliary proteins SecDF. Other proteins may also be involved. It depends on Zn(2+) as a cofactor.

It is found in the cell inner membrane. The protein resides in the cytoplasm. The catalysed reaction is ATP + H2O + cellular proteinSide 1 = ADP + phosphate + cellular proteinSide 2.. Functionally, part of the Sec protein translocase complex. Interacts with the SecYEG preprotein conducting channel. Has a central role in coupling the hydrolysis of ATP to the transfer of proteins into and across the cell membrane, serving as an ATP-driven molecular motor driving the stepwise translocation of polypeptide chains across the membrane. The chain is Protein translocase subunit SecA from Chloroherpeton thalassium (strain ATCC 35110 / GB-78).